The sequence spans 987 residues: Mediator of RNA polymerase II transcription subunit 24 (987 aa).

Short sequence motifs (LXXLL motif) lie at residues 128–132 (LHWLL), 344–348 (LTPLL), 446–450 (LDLLL), 555–559 (LVALL), 786–790 (LPGLL), and 855–859 (LMRLL). 2 positions are modified to phosphoserine: Ser860 and Ser871.

This sequence belongs to the Mediator complex subunit 24 family. Component of the Mediator complex, which is composed of MED1, MED4, MED6, MED7, MED8, MED9, MED10, MED11, MED12, MED13, MED13L, MED14, MED15, MED16, MED17, MED18, MED19, MED20, MED21, MED22, MED23, MED24, MED25, MED26, MED27, MED29, MED30, MED31, CCNC, CDK8 and CDC2L6/CDK11. The MED12, MED13, CCNC and CDK8 subunits form a distinct module termed the CDK8 module. Mediator containing the CDK8 module is less active than Mediator lacking this module in supporting transcriptional activation. Individual preparations of the Mediator complex lacking one or more distinct subunits have been variously termed ARC, CRSP, DRIP, PC2, SMCC and TRAP. Interacts with AR.

It localises to the nucleus. Its function is as follows. Component of the Mediator complex, a coactivator involved in the regulated transcription of nearly all RNA polymerase II-dependent genes. Mediator functions as a bridge to convey information from gene-specific regulatory proteins to the basal RNA polymerase II transcription machinery. Mediator is recruited to promoters by direct interactions with regulatory proteins and serves as a scaffold for the assembly of a functional preinitiation complex with RNA polymerase II and the general transcription factors. The polypeptide is Mediator of RNA polymerase II transcription subunit 24 (Med24) (Rattus norvegicus (Rat)).